An 800-amino-acid chain; its full sequence is Putative antiporter subunit mnhA2 (800 aa).

The next 20 membrane-spanning stretches (helical) occupy residues 1–21, 33–53, 78–98, 118–138, 167–187, 207–227, 241–261, 273–293, 300–320, 331–351, 387–407, 424–444, 472–492, 527–547, 595–615, 627–647, 651–671, 676–696, 712–732, and 768–788; these read MSLV…LLMS, IALV…PSVA, GLSL…FFYA, LFMF…MYIF, FMIT…LYIM, GLFI…SAQF, TPVS…FLLL, YIYI…ITAL, GILA…VGIG, IASI…NHAI, LVMT…GFLS, FSLI…IFTF, PWLF…IFFV, GFNI…VLAI, IIMT…RIGL, GALE…LIFI, LTMV…FIAM, LALT…VSFS, IIKI…IFIT, and LDTL…YTLL.

Belongs to the CPA3 antiporters (TC 2.A.63) subunit A family. May form a heterooligomeric complex that consists of seven subunits: mnhA2, mnhB2, mnhC2, mnhD2, mnhE2, mnhF2 and mnhG2.

It is found in the cell membrane. The sequence is that of Putative antiporter subunit mnhA2 (mnhA2) from Staphylococcus aureus (strain Mu3 / ATCC 700698).